Consider the following 405-residue polypeptide: Enoyl-[acyl-carrier-protein] reductase [NADH] (405 aa).

NAD(+)-binding positions include 48–53 (GASSGY), 74–75 (FE), 111–112 (DA), and 140–141 (LA). Tyr226 provides a ligand contact to substrate. Residue Tyr236 is the Proton donor of the active site. NAD(+) contacts are provided by residues Lys245 and 274–276 (VVT).

It belongs to the TER reductase family. As to quaternary structure, monomer.

It catalyses the reaction a 2,3-saturated acyl-[ACP] + NAD(+) = a (2E)-enoyl-[ACP] + NADH + H(+). Its pathway is lipid metabolism; fatty acid biosynthesis. In terms of biological role, involved in the final reduction of the elongation cycle of fatty acid synthesis (FAS II). Catalyzes the reduction of a carbon-carbon double bond in an enoyl moiety that is covalently linked to an acyl carrier protein (ACP). This is Enoyl-[acyl-carrier-protein] reductase [NADH] from Xanthomonas oryzae pv. oryzae (strain PXO99A).